The chain runs to 577 residues: uncharacterized protein (577 aa).

Polar residues-rich tracts occupy residues 1 to 21 (MSST…QSAS) and 68 to 87 (SFQN…SKTE). Disordered regions lie at residues 1-24 (MSST…SAHP) and 68-93 (SFQN…PDDV). 12 helical membrane-spanning segments follow: residues 139–159 (CILA…AVPA), 174–194 (LLTM…WAPL), 204–224 (ILIG…GKDI), 232–252 (FFAG…LADM), 262–282 (ITLF…VGGF), 292–312 (WTEY…YLFC), 367–387 (PICF…YLLL), 402–422 (MGVA…GSGI), 447–467 (LPPM…LSWS), 473–493 (VNWV…LLIF), 504–526 (YLFR…AAGF), and 543–563 (GSLL…FFFF).

It belongs to the major facilitator superfamily. CAR1 family.

It is found in the endoplasmic reticulum. Its subcellular location is the membrane. This is an uncharacterized protein from Schizosaccharomyces pombe (strain 972 / ATCC 24843) (Fission yeast).